We begin with the raw amino-acid sequence, 600 residues long: Probable tripeptidyl-peptidase SED4 (600 aa).

A signal peptide spans M1–A22. Positions A23–T202 are cleaved as a propeptide — removed in mature form. N-linked (GlcNAc...) asparagine glycosylation is found at N210 and N281. The 389-residue stretch at T212 to I600 folds into the Peptidase S53 domain. Active-site charge relay system residues include E288 and D292. Residues N323 and N404 are each glycosylated (N-linked (GlcNAc...) asparagine). Catalysis depends on S504, which acts as the Charge relay system. 2 residues coordinate Ca(2+): D546 and I547. The N-linked (GlcNAc...) asparagine glycan is linked to N575. Ca(2+) is bound by residues G579 and D581.

Ca(2+) is required as a cofactor.

The protein localises to the secreted. It localises to the extracellular space. The enzyme catalyses Release of an N-terminal tripeptide from a polypeptide.. In terms of biological role, secreted tripeptidyl-peptidase which degrades proteins at acidic pHs and is involved in virulence. The protein is Probable tripeptidyl-peptidase SED4 (SED4) of Arthroderma benhamiae (strain ATCC MYA-4681 / CBS 112371) (Trichophyton mentagrophytes).